Consider the following 236-residue polypeptide: UPF0502 protein BamMC406_5439 (236 aa).

It belongs to the UPF0502 family.

This is UPF0502 protein BamMC406_5439 from Burkholderia ambifaria (strain MC40-6).